The primary structure comprises 303 residues: Glycine--tRNA ligase alpha subunit (303 aa).

It belongs to the class-II aminoacyl-tRNA synthetase family. In terms of assembly, tetramer of two alpha and two beta subunits.

The protein resides in the cytoplasm. The enzyme catalyses tRNA(Gly) + glycine + ATP = glycyl-tRNA(Gly) + AMP + diphosphate. This is Glycine--tRNA ligase alpha subunit (glyQ) from Escherichia coli (strain K12).